Consider the following 385-residue polypeptide: 1-deoxy-D-xylulose 5-phosphate reductoisomerase (385 aa).

T10, G11, I13, G36, and N38 together coordinate NADPH. A 1-deoxy-D-xylulose 5-phosphate-binding site is contributed by K123. An NADPH-binding site is contributed by E124. D148 contributes to the Mn(2+) binding site. Positions 149, 150, 172, and 195 each coordinate 1-deoxy-D-xylulose 5-phosphate. Residue E150 coordinates Mn(2+). G201 contacts NADPH. 1-deoxy-D-xylulose 5-phosphate is bound by residues S208, N213, K214, and E217. A Mn(2+)-binding site is contributed by E217.

It belongs to the DXR family. Requires Mg(2+) as cofactor. The cofactor is Mn(2+).

The enzyme catalyses 2-C-methyl-D-erythritol 4-phosphate + NADP(+) = 1-deoxy-D-xylulose 5-phosphate + NADPH + H(+). The protein operates within isoprenoid biosynthesis; isopentenyl diphosphate biosynthesis via DXP pathway; isopentenyl diphosphate from 1-deoxy-D-xylulose 5-phosphate: step 1/6. Catalyzes the NADPH-dependent rearrangement and reduction of 1-deoxy-D-xylulose-5-phosphate (DXP) to 2-C-methyl-D-erythritol 4-phosphate (MEP). The polypeptide is 1-deoxy-D-xylulose 5-phosphate reductoisomerase (Anaplasma phagocytophilum (strain HZ)).